A 643-amino-acid chain; its full sequence is Pescadillo homolog (643 aa).

A BRCT domain is found at 319–412 (KLKTLFKGLK…RLLPTNKYFM (94 aa)). Disordered regions lie at residues 437–475 (AARKAAEGEEEEETFEPAEVNADHEHISDDEEVQDPENE), 492–571 (TDSL…YREN), and 609–643 (DKNARLLANKRERIEKQKRAEQMEKQKQQRKQILA). Residues 464 to 475 (SDDEEVQDPENE) show a composition bias toward acidic residues. The segment covering 492-518 (TDSLNSGKKEGADDATDNGKDAAEKKQ) has biased composition (basic and acidic residues). A compositionally biased stretch (acidic residues) spans 524–544 (GESDDEDEEEEDDDDGEEEED). Residues 569–643 (RENEAEKKIV…QKQQRKQILA (75 aa)) adopt a coiled-coil conformation. Residues 609–635 (DKNARLLANKRERIEKQKRAEQMEKQK) show a composition bias toward basic and acidic residues.

This sequence belongs to the pescadillo family.

It localises to the nucleus. The protein localises to the nucleolus. The protein resides in the nucleoplasm. In terms of biological role, required for maturation of ribosomal RNAs and formation of the large ribosomal subunit. The polypeptide is Pescadillo homolog (Anopheles gambiae (African malaria mosquito)).